Here is a 151-residue protein sequence, read N- to C-terminus: Deoxyuridine 5'-triphosphate nucleotidohydrolase (151 aa).

Residues 70–72, N83, 87–89, and M97 contribute to the substrate site; these read RSG and LID.

This sequence belongs to the dUTPase family. Mg(2+) serves as cofactor.

The enzyme catalyses dUTP + H2O = dUMP + diphosphate + H(+). It functions in the pathway pyrimidine metabolism; dUMP biosynthesis; dUMP from dCTP (dUTP route): step 2/2. This enzyme is involved in nucleotide metabolism: it produces dUMP, the immediate precursor of thymidine nucleotides and it decreases the intracellular concentration of dUTP so that uracil cannot be incorporated into DNA. This is Deoxyuridine 5'-triphosphate nucleotidohydrolase from Pseudomonas putida (strain ATCC 700007 / DSM 6899 / JCM 31910 / BCRC 17059 / LMG 24140 / F1).